A 3546-amino-acid chain; its full sequence is Ubiquitin carboxyl-terminal hydrolase 34 (3546 aa).

Phosphoserine occurs at positions 352, 486, 487, and 490. 3 disordered regions span residues 502 to 535, 550 to 679, and 1459 to 1478; these read KEEE…SGGS, VQQR…VFNT, and TGSY…DQVE. Positions 511-524 are enriched in low complexity; the sequence is APSPWSPAASPQSS. Polar residues-rich tracts occupy residues 525–534 and 560–570; these read DNSDTHQSGG and SMQGSSDETAN. Over residues 571 to 590 the composition is skewed to low complexity; that stretch reads SGEDGSSGPGSSSGHSDGSS. Positions 591-609 are enriched in polar residues; that stretch reads NEVNSSHASQSAGSPGSEV. Residues 610–627 show a composition bias toward acidic residues; the sequence is QSEDIADIEALKEEDEDD. Ser649 bears the Phosphoserine mark. Polar residues predominate over residues 659–671; that stretch reads QGMSERNGTSSGT. Over residues 1467–1477 the composition is skewed to acidic residues; sequence PDSDDSSEDQV. Position 1469 is a phosphoserine (Ser1469). Residues 1894–2239 form the USP domain; sequence VGLTNLGATC…SAYMLFYKRM (346 aa). The active-site Nucleophile is Cys1903. His2164 (proton acceptor) is an active-site residue. A Phosphoserine modification is found at Ser2488. Residues 3331–3443 form a disordered region; the sequence is NSLQEQEAKE…HAEEQSNNGR (113 aa). A compositionally biased stretch (basic and acidic residues) spans 3336 to 3347; it reads QEAKERKTKDDE. Phosphoserine occurs at positions 3358 and 3359. Thr3381 bears the Phosphothreonine mark. Ser3386 and Ser3406 each carry phosphoserine. Residues 3421–3432 show a composition bias toward polar residues; it reads SSFSEDMSNIRS. Residues 3433–3443 show a composition bias toward basic and acidic residues; sequence QHAEEQSNNGR. A Phosphoserine modification is found at Ser3503.

Belongs to the peptidase C19 family. In terms of assembly, interacts with AXIN1 and AXIN2. Expressed in brain at low level.

The catalysed reaction is Thiol-dependent hydrolysis of ester, thioester, amide, peptide and isopeptide bonds formed by the C-terminal Gly of ubiquitin (a 76-residue protein attached to proteins as an intracellular targeting signal).. Its function is as follows. Ubiquitin hydrolase that can remove conjugated ubiquitin from AXIN1 and AXIN2, thereby acting as a regulator of Wnt signaling pathway. Acts as an activator of the Wnt signaling pathway downstream of the beta-catenin destruction complex by deubiquitinating and stabilizing AXIN1 and AXIN2, leading to promote nuclear accumulation of AXIN1 and AXIN2 and positively regulate beta-catenin (CTNBB1)-mediated transcription. Recognizes and hydrolyzes the peptide bond at the C-terminal Gly of ubiquitin. Involved in the processing of poly-ubiquitin precursors as well as that of ubiquitinated proteins. In Homo sapiens (Human), this protein is Ubiquitin carboxyl-terminal hydrolase 34 (USP34).